The chain runs to 132 residues: Pre-histone-like nucleoprotein (132 aa).

Residues 2 to 23 (AILISPSNNTGWGLGTHKLFGG) constitute a propeptide that is removed on maturation. Positions 124 to 132 (RRKRRVRSK) match the Nuclear localization signal motif.

It belongs to the adenoviridae histone-like nucleoprotein family. In terms of assembly, interacts with the core-capsid bridging protein; this interaction bridges the virus core to the capsid. Interacts with host NPM1; this interaction might play a role in placing the pre-histone-like nucleoprotein on the viral DNA or regulating viral gene expression. Interacts with host HMGB1; this interaction inhibits host immune response. Cleaved near the N-terminus by the viral protease during virion maturation to form the mature protein.

It localises to the virion. Its subcellular location is the host nucleus. The protein localises to the host nucleolus. Plays a role in the inhibition of host immune response within the nucleus. Interacts with cellular nucleosomes and immobilizes the host immune danger signal HMGB1 on chromatin. In turn, prevents HMGB1 release out of the cell and thus decreases inflammation. Also plays a role in the wrapping and condensation of the viral DNA. May also promote viral genome import into the nucleus. The protein is Pre-histone-like nucleoprotein of Canine adenovirus serotype 1 (strain RI261) (CAdV-1).